Reading from the N-terminus, the 286-residue chain is Energy-coupling factor transporter ATP-binding protein EcfA2 (286 aa).

The 243-residue stretch at Ile-3–Ala-245 folds into the ABC transporter domain. Gly-40–Ser-47 provides a ligand contact to ATP.

Belongs to the ABC transporter superfamily. Energy-coupling factor EcfA family. Forms a stable energy-coupling factor (ECF) transporter complex composed of 2 membrane-embedded substrate-binding proteins (S component), 2 ATP-binding proteins (A component) and 2 transmembrane proteins (T component).

Its subcellular location is the cell membrane. In terms of biological role, ATP-binding (A) component of a common energy-coupling factor (ECF) ABC-transporter complex. Unlike classic ABC transporters this ECF transporter provides the energy necessary to transport a number of different substrates. This is Energy-coupling factor transporter ATP-binding protein EcfA2 from Clostridium acetobutylicum (strain ATCC 824 / DSM 792 / JCM 1419 / IAM 19013 / LMG 5710 / NBRC 13948 / NRRL B-527 / VKM B-1787 / 2291 / W).